A 203-amino-acid chain; its full sequence is Holliday junction branch migration complex subunit RuvA (203 aa).

Positions 1–63 are domain I; the sequence is MIGQLSGKVD…EEHIHLYGFL (63 aa). A domain II region spans residues 64–142; it reads TLEEKIFFNL…KISSGSAIIK (79 aa). The flexible linker stretch occupies residues 143–149; sequence ESLNIKN. Positions 150–203 are domain III; it reads ITPVASNEVIKALVNLGFSRFEAQNAVQGIITQNPEISIDELIKTALKNRNSNF.

The protein belongs to the RuvA family. As to quaternary structure, homotetramer. Forms an RuvA(8)-RuvB(12)-Holliday junction (HJ) complex. HJ DNA is sandwiched between 2 RuvA tetramers; dsDNA enters through RuvA and exits via RuvB. An RuvB hexamer assembles on each DNA strand where it exits the tetramer. Each RuvB hexamer is contacted by two RuvA subunits (via domain III) on 2 adjacent RuvB subunits; this complex drives branch migration. In the full resolvosome a probable DNA-RuvA(4)-RuvB(12)-RuvC(2) complex forms which resolves the HJ.

It is found in the cytoplasm. Functionally, the RuvA-RuvB-RuvC complex processes Holliday junction (HJ) DNA during genetic recombination and DNA repair, while the RuvA-RuvB complex plays an important role in the rescue of blocked DNA replication forks via replication fork reversal (RFR). RuvA specifically binds to HJ cruciform DNA, conferring on it an open structure. The RuvB hexamer acts as an ATP-dependent pump, pulling dsDNA into and through the RuvAB complex. HJ branch migration allows RuvC to scan DNA until it finds its consensus sequence, where it cleaves and resolves the cruciform DNA. This Rickettsia conorii (strain ATCC VR-613 / Malish 7) protein is Holliday junction branch migration complex subunit RuvA.